Consider the following 590-residue polypeptide: Nuclear receptor subfamily 2 group C member 1 (590 aa).

The segment at 1 to 166 (MATIEEIAHQ…RLQRCIAFGM (166 aa)) is required for interaction with KAT2B. The nuclear receptor DNA-binding region spans 98–173 (FDLCVVCGDK…FGMKQDSVQC (76 aa)). 2 consecutive NR C4-type zinc fingers follow at residues 101-121 (CVVC…CEGC) and 137-156 (CRGS…CQYC). Phosphoserine is present on residues Ser-185 and Ser-203. Phosphothreonine is present on Thr-208. Thr-210 carries the phosphothreonine; by MAPK1 modification. Lys-238 participates in a covalent cross-link: Glycyl lysine isopeptide (Lys-Gly) (interchain with G-Cter in SUMO); alternate. A Glycyl lysine isopeptide (Lys-Gly) (interchain with G-Cter in SUMO2); alternate cross-link involves residue Lys-238. Positions 333–577 (ESMEGSTHLI…SVIPHILKME (245 aa)) constitute an NR LBD domain. Ser-568 carries the post-translational modification Phosphoserine; by PKC. The segment at 571–590 (PHILKMEPADYNSQIIGHSL) is required for interaction with NRIP1. Residue Lys-575 forms a Glycyl lysine isopeptide (Lys-Gly) (interchain with G-Cter in SUMO2) linkage.

This sequence belongs to the nuclear hormone receptor family. NR2 subfamily. In terms of assembly, homodimer. Heterodimer; with NR2C2 which is required for chromatin remodeling and for binding to promoter regions such as globin DR1 repeats. Interacts with ESR1; the interaction prevents homodimerization of ESR1 and suppresses its transcriptional activity and cell growth. Interacts with NRIP1 (via its LXXLL motifs); the interaction provides corepressor activity. Interacts with HDAC3 (via the DNA-binding domain); the interaction recruits phosphorylated NR2C1 to PML bodies for sumoylation. Interacts with HDAC4 (via the DNA-binding domain). Interacts with PIAS1; the interaction is required for sumoylation of NR2C1. Interacts with UBE2I; the interaction is required for sumoylation of NR2C1. Interacts with KAT2B; the interaction acts as a corepressor of gene expression. In terms of processing, sumoylation requires both PIAS1 and UBE2I. Sumoylation appears to dissociate NR2C1 from the PML nuclear bodies. Enhances the interaction with NRIP1 but inhibits interaction with KAT2B. In proliferating cells, stimulation by all-trans retinoic acid, activation of MAPK1-mediated phosphorylation and recruitment to PML bodies with subsequent sumoylation, suppresses OCT4 expression. Phosphorylated on several serine and threonine residues. Phosphorylation on Thr-210, stimulated by all-trans retinoic acid (atRA) mediates PML location and sumoylation in proliferating cells which then modulates its association with effector molecules, KAT2B and NRIP1. Phosphorylation on Ser-568 by PKC is important for protein stability and function as activator of RARB.

The protein resides in the nucleus. The protein localises to the PML body. Its function is as follows. Orphan nuclear receptor. Binds the IR7 element in the promoter of its own gene in an autoregulatory negative feedback mechanism. Primarily repressor of a broad range of genes including ESR1 and RARB. Together with NR2C2, forms the core of the DRED (direct repeat erythroid-definitive) complex that represses embryonic and fetal globin transcription. Binds to hormone response elements (HREs) consisting of two 5'-AGGTCA-3' half site direct repeat consensus sequences. Also activator of OCT4 gene expression. Plays a fundamental role in early embryogenesis and regulates embryonic stem cell proliferation and differentiation. Mediator of retinoic acid-regulated preadipocyte proliferation. The polypeptide is Nuclear receptor subfamily 2 group C member 1 (Nr2c1) (Rattus norvegicus (Rat)).